Here is a 477-residue protein sequence, read N- to C-terminus: Argininosuccinate lyase (477 aa).

Residues 1 to 18 (MTTSSHSSEQPTSTQTSG) are compositionally biased toward polar residues. Residues 1–21 (MTTSSHSSEQPTSTQTSGMWG) form a disordered region.

It belongs to the lyase 1 family. Argininosuccinate lyase subfamily.

It is found in the cytoplasm. The catalysed reaction is 2-(N(omega)-L-arginino)succinate = fumarate + L-arginine. Its pathway is amino-acid biosynthesis; L-arginine biosynthesis; L-arginine from L-ornithine and carbamoyl phosphate: step 3/3. The polypeptide is Argininosuccinate lyase (Acinetobacter baylyi (strain ATCC 33305 / BD413 / ADP1)).